The following is a 228-amino-acid chain: Ribosomal RNA small subunit methyltransferase G (228 aa).

S-adenosyl-L-methionine is bound by residues glycine 89, leucine 94, 140–141 (VE), and arginine 159.

This sequence belongs to the methyltransferase superfamily. RNA methyltransferase RsmG family.

Its subcellular location is the cytoplasm. It catalyses the reaction guanosine(527) in 16S rRNA + S-adenosyl-L-methionine = N(7)-methylguanosine(527) in 16S rRNA + S-adenosyl-L-homocysteine. Functionally, specifically methylates the N7 position of guanine in position 527 of 16S rRNA. This Burkholderia multivorans (strain ATCC 17616 / 249) protein is Ribosomal RNA small subunit methyltransferase G.